The sequence spans 87 residues: Phosphocarrier protein HPr (87 aa).

The HPr domain occupies 2–87; that stretch reads ASKDFHIVAE…NETMTKEGLA (86 aa). Catalysis depends on His15, which acts as the Pros-phosphohistidine intermediate. Ser46 bears the Phosphoserine; by HPrK/P mark.

This sequence belongs to the HPr family.

It localises to the cytoplasm. With respect to regulation, phosphorylation on Ser-46 inhibits the phosphoryl transfer from enzyme I to HPr. In terms of biological role, general (non sugar-specific) component of the phosphoenolpyruvate-dependent sugar phosphotransferase system (sugar PTS). This major carbohydrate active-transport system catalyzes the phosphorylation of incoming sugar substrates concomitantly with their translocation across the cell membrane. The phosphoryl group from phosphoenolpyruvate (PEP) is transferred to the phosphoryl carrier protein HPr by enzyme I. Phospho-HPr then transfers it to the PTS EIIA domain. P-Ser-HPr interacts with the catabolite control protein A (CcpA), forming a complex that binds to DNA at the catabolite response elements cre, operator sites preceding a large number of catabolite-regulated genes. Thus, P-Ser-HPr is a corepressor in carbon catabolite repression (CCR), a mechanism that allows bacteria to coordinate and optimize the utilization of available carbon sources. P-Ser-HPr also plays a role in inducer exclusion, in which it probably interacts with several non-PTS permeases and inhibits their transport activity. This is Phosphocarrier protein HPr (ptsH) from Streptococcus mutans serotype c (strain ATCC 700610 / UA159).